The primary structure comprises 299 residues: Acetylglutamate kinase (299 aa).

Residues 64 to 65 (GG), R86, and N197 contribute to the substrate site.

Belongs to the acetylglutamate kinase family. ArgB subfamily.

It localises to the cytoplasm. It catalyses the reaction N-acetyl-L-glutamate + ATP = N-acetyl-L-glutamyl 5-phosphate + ADP. Its pathway is amino-acid biosynthesis; L-arginine biosynthesis; N(2)-acetyl-L-ornithine from L-glutamate: step 2/4. Functionally, catalyzes the ATP-dependent phosphorylation of N-acetyl-L-glutamate. In Persephonella marina (strain DSM 14350 / EX-H1), this protein is Acetylglutamate kinase.